Reading from the N-terminus, the 566-residue chain is Putative sensory transducer protein YvaQ (566 aa).

Residues 1–31 form the signal peptide; that stretch reads MRLTISRKFSLVFLTLILINLLVGGIGVLNM. Residues 74 to 110 are a coiled coil; that stretch reads DKSKMDTLDQEMNQIMEDINQKLDNYEKTISTDKEQK. The chain crosses the membrane as a helical span at residues 186–206; the sequence is IYTALLVAASILISIFIWLYI. In terms of domain architecture, HAMP spans 208–261; sequence RNIVKPIIRMKESANHIAEGDLSNDMEALNSKDELGDLNEALQKMVGNLRDIVG. The Methyl-accepting transducer domain maps to 280–530; the sequence is ATNETRSGSK…ESAAGIEETF (251 aa). Positions 536 to 566 form a coiled coil; sequence SAHSMDQVLLNAEELEQLANELNEKMGQFTI.

This sequence belongs to the methyl-accepting chemotaxis (MCP) protein family.

The protein resides in the cell membrane. Functionally, chemotactic-signal transducers respond to changes in the concentration of attractants and repellents in the environment, transduce a signal from the outside to the inside of the cell, and facilitate sensory adaptation through the variation of the level of methylation. Attractants increase the level of methylation while repellents decrease the level of methylation. The sequence is that of Putative sensory transducer protein YvaQ (yvaQ) from Bacillus subtilis (strain 168).